The following is an 865-amino-acid chain: Xylosyltransferase 2 (865 aa).

The Cytoplasmic segment spans residues 1–15 (MVASARVQKLVRRYK). A helical; Signal-anchor for type II membrane protein membrane pass occupies residues 16-36 (LAIATALAILLLQGLVVWSFS). Residues 37-865 (GLEEDEPGEK…GPVKADGRLR (829 aa)) are Lumenal-facing. The segment at 39–157 (EEDEPGEKGR…EGAPQPTDNG (119 aa)) is disordered. Residues 53–65 (RPLDPGEGSKDTD) are compositionally biased toward basic and acidic residues. The segment covering 73–82 (SAGRRHGRWR) has biased composition (basic residues). The N-linked (GlcNAc...) asparagine glycan is linked to asparagine 122. Residues 125 to 137 (GAAAGEALVGAAG) show a composition bias toward low complexity. Disulfide bonds link cysteine 162-cysteine 190, cysteine 206-cysteine 448, cysteine 467-cysteine 480, and cysteine 469-cysteine 478. UDP-alpha-D-xylose is bound by residues valine 239, aspartate 267, and 296–298 (TIW). Asparagine 327 carries N-linked (GlcNAc...) asparagine glycosylation. Residue 400–401 (DW) participates in UDP-alpha-D-xylose binding. UDP-alpha-D-xylose is bound by residues serine 481 and 504–505 (RK). 2 disulfides stabilise this stretch: cysteine 581–cysteine 833 and cysteine 826–cysteine 839. N-linked (GlcNAc...) asparagine glycosylation is present at asparagine 683.

The protein belongs to the glycosyltransferase 14 family. XylT subfamily. Monomer. The cofactor is Mg(2+). It depends on Mn(2+) as a cofactor. Contains disulfide bonds.

It is found in the golgi apparatus membrane. Its subcellular location is the secreted. It carries out the reaction UDP-alpha-D-xylose + L-seryl-[protein] = 3-O-(beta-D-xylosyl)-L-seryl-[protein] + UDP + H(+). Its pathway is glycan metabolism; chondroitin sulfate biosynthesis. It participates in glycan metabolism; heparan sulfate biosynthesis. Its function is as follows. Catalyzes the first step in the biosynthesis of chondroitin sulfate, heparan sulfate and dermatan sulfate proteoglycans, such as DCN. Transfers D-xylose from UDP-D-xylose to specific serine residues of the core protein. The polypeptide is Xylosyltransferase 2 (XYLT2) (Canis lupus familiaris (Dog)).